The chain runs to 476 residues: MPPSIPVPSIVTRAIPSLARAASTTTKSTPSKEHHVHSYSPEVLPLGYAVASTHASIKKKTGALDLGILVSTTDKPASAAACLTRNVFKAAPVTVTTQLLQSGGGRARGFIVNSGCANAVTGKKGLEDAWEMSNTVTSQLPPGQRGIGTLVMSTGVIGQPLPISSIISKIPELVRSLDDSPKSWLDLSKSFMTTDTFPKLRAKSFRLGERLVRIAGIDKGAGMIAPSMGPPQPPHATLLGVIATDAAISPPALQSALNYAVDRSFNNITVDGDMSTNDSIICLANGAAGKLETQGRETAEGMEEITEDGHPEEYKVFREELRSFAEELAQLVVRDGEGATKFVTIRVKNAPSYETAQAVAKSIANSSLFKTAMYGEDANWGRILCAVGYTPTAQAIIPNHVSVSFIPSANVSDPTPLRLLTNGEPEANIDEDRASVILAEEDLEVEVDLGDGHEEAKVWTCDFSHEYVTINGSYRS.

Substrate contacts are provided by Thr193, Lys219, Thr237, Glu337, Asn471, and Ser476. Thr237 acts as the Nucleophile in catalysis.

It belongs to the ArgJ family. In terms of assembly, heterodimer of an alpha and a beta chain. In terms of processing, the alpha and beta chains are autoproteolytically processed from a single precursor protein within the mitochondrion.

Its subcellular location is the mitochondrion matrix. The catalysed reaction is N(2)-acetyl-L-ornithine + L-glutamate = N-acetyl-L-glutamate + L-ornithine. It carries out the reaction L-glutamate + acetyl-CoA = N-acetyl-L-glutamate + CoA + H(+). The protein operates within amino-acid biosynthesis; L-arginine biosynthesis; L-ornithine and N-acetyl-L-glutamate from L-glutamate and N(2)-acetyl-L-ornithine (cyclic): step 1/1. It participates in amino-acid biosynthesis; L-arginine biosynthesis; N(2)-acetyl-L-ornithine from L-glutamate: step 1/4. Catalyzes two activities which are involved in the cyclic version of arginine biosynthesis: the synthesis of acetylglutamate from glutamate and acetyl-CoA, and of ornithine by transacetylation between acetylornithine and glutamate. This chain is Arginine biosynthesis bifunctional protein ArgJ, mitochondrial, found in Cryptococcus neoformans var. neoformans serotype D (strain B-3501A) (Filobasidiella neoformans).